A 304-amino-acid polypeptide reads, in one-letter code: MKAQKPGLHPRNRHHQRYDLPALCQAHPDLQGYITLNPLGEQTIDFANPQAVKALNKALLAHFYAVKHWDIPDGFLCPPVPGRADYIHHLADLLAGDSGEVPKDATILDIGTGANLIYPLIGAHEYGWRFTGSEINPQAFASAQAIINGNPGLTRQIRLRRQKESQAIFHGVIHKNETYDATLCNPPFHDSAESARAGGERKRRNLGLGAESGLNFGGQQQELWCEGGEVAFISQMIRESQAFARQVKWFTSLVSRGDNLPPLYRLLTEVGAVKVVKKEMAQGQKQSRFIAWSFMDDAKRRRPF.

Belongs to the methyltransferase superfamily. METTL16/RlmF family.

It localises to the cytoplasm. It catalyses the reaction adenosine(1618) in 23S rRNA + S-adenosyl-L-methionine = N(6)-methyladenosine(1618) in 23S rRNA + S-adenosyl-L-homocysteine + H(+). Specifically methylates the adenine in position 1618 of 23S rRNA. This chain is Ribosomal RNA large subunit methyltransferase F, found in Klebsiella pneumoniae subsp. pneumoniae (strain ATCC 700721 / MGH 78578).